Reading from the N-terminus, the 241-residue chain is ATP synthase subunit a (241 aa).

Transmembrane regions (helical) follow at residues 27 to 47 (NCSLVMVLASVSSILLLCWAL), 52 to 72 (VVPGPSQTAVELIYGFVANTL), 87 to 107 (VMTTFLFVLACNLVGILPFGF), 112 to 132 (HLSVTLALSLVVCTAITVIGF), 142 to 162 (IFLPEGTPLWLAPMMVFIKLF), 175 to 195 (LAANMIAGHTIIAVIADFVLK), and 198 to 218 (LVLAPLPFAFIMGLIAFEIFV).

This sequence belongs to the ATPase A chain family. F-type ATPases have 2 components, CF(1) - the catalytic core - and CF(0) - the membrane proton channel. CF(1) has five subunits: alpha(3), beta(3), gamma(1), delta(1), epsilon(1). CF(0) has three main subunits: a(1), b(2) and c(9-12). The alpha and beta chains form an alternating ring which encloses part of the gamma chain. CF(1) is attached to CF(0) by a central stalk formed by the gamma and epsilon chains, while a peripheral stalk is formed by the delta and b chains.

The protein localises to the cell inner membrane. In terms of biological role, key component of the proton channel; it plays a direct role in the translocation of protons across the membrane. The polypeptide is ATP synthase subunit a (Anaplasma marginale (strain St. Maries)).